The following is a 443-amino-acid chain: Protein translocase subunit SecY (443 aa).

Transmembrane regions (helical) follow at residues 24-44 (LFVI…IPGI), 77-97 (IFAL…LLTV), 125-145 (LVLA…MPGM), 154-174 (FAFY…LMWL), 183-203 (IGNG…PPAI), 217-237 (FLVL…VVFV), 274-294 (VIPA…ASWF), 317-337 (YVLL…ALVF), 370-390 (MTRL…IPEF), and 397-417 (VPFY…MDFM).

The protein belongs to the SecY/SEC61-alpha family. In terms of assembly, component of the Sec protein translocase complex. Heterotrimer consisting of SecY, SecE and SecG subunits. The heterotrimers can form oligomers, although 1 heterotrimer is thought to be able to translocate proteins. Interacts with the ribosome. Interacts with SecDF, and other proteins may be involved. Interacts with SecA.

The protein resides in the cell inner membrane. Functionally, the central subunit of the protein translocation channel SecYEG. Consists of two halves formed by TMs 1-5 and 6-10. These two domains form a lateral gate at the front which open onto the bilayer between TMs 2 and 7, and are clamped together by SecE at the back. The channel is closed by both a pore ring composed of hydrophobic SecY resides and a short helix (helix 2A) on the extracellular side of the membrane which forms a plug. The plug probably moves laterally to allow the channel to open. The ring and the pore may move independently. The polypeptide is Protein translocase subunit SecY (Escherichia coli O157:H7).